Consider the following 143-residue polypeptide: Large ribosomal subunit protein bL28c (143 aa).

A chloroplast-targeting transit peptide spans 1–66; the sequence is MTTMATQGAW…SFPGIQPIVA (66 aa).

Belongs to the bacterial ribosomal protein bL28 family. Part of the 50S ribosomal subunit.

Its subcellular location is the plastid. It localises to the chloroplast. The sequence is that of Large ribosomal subunit protein bL28c (RPL28) from Arabidopsis thaliana (Mouse-ear cress).